A 1320-amino-acid chain; its full sequence is Inner centromere protein A (1320 aa).

Disordered regions lie at residues 53 to 75 (KNSNYLNNNNNNNNNNNNNNNIS), 426 to 447 (QEKQQQQQEKQQEKQQQQQPVV), 611 to 679 (NEPI…VVPP), 701 to 877 (EEEE…NTAS), and 896 to 1215 (TKSP…DGDE). 3 stretches are compositionally biased toward low complexity: residues 54–75 (NSNYLNNNNNNNNNNNNNNNIS), 429–447 (QQQQQEKQQEKQQQQQPVV), and 615–640 (QQPSSSSSQLSSSQQPSSSSSSSSSS). Residues 221-444 (QQNQFQEQHK…KQQEKQQQQQ (224 aa)) are a coiled coil. Residues 653 to 668 (TIVTSKPTNKVQPQSL) are compositionally biased toward polar residues. Positions 669–679 (NSNINNNVVPP) are enriched in low complexity. A coiled-coil region spans residues 683-855 (AAIANKLKKQ…QKKKTVQTIL (173 aa)). Over residues 701 to 835 (EEEERLRKKQ…QEKEKQEKQK (135 aa)) the composition is skewed to basic and acidic residues. Polar residues predominate over residues 851–863 (VQTILPTPQTPSR). The span at 864-877 (SANNNYDDAANTAS) shows a compositional bias: low complexity. 2 stretches are compositionally biased toward acidic residues: residues 908–926 (DDQDDDDCEDYDGTDENSE) and 934–951 (QDDSDQEIEEQFENDSDE). The segment covering 965–977 (NKNKNSNNSNNNN) has biased composition (low complexity). The segment covering 981–1000 (QSRKDKSIVFDSDSLNRNHN) has biased composition (basic and acidic residues). Composition is skewed to low complexity over residues 1026–1040 (SNMKNNNNNNTYSNS) and 1047–1061 (SPPSSVSDYSPSSES). The span at 1062-1071 (NDCFSPLTPT) shows a compositional bias: polar residues. Residues 1072–1096 (NNNKINNNKINNNNSNNNSFNNSNS) are compositionally biased toward low complexity. Residues 1120–1136 (SKTSPFLTIRNTPSPLK) show a composition bias toward polar residues. Residues 1143–1154 (NMSSASSLSSFD) show a composition bias toward low complexity. Acidic residues predominate over residues 1155-1170 (SDNDSDYNDNDIDDGE). Residues 1175-1187 (PNENFTTPLKNQE) are compositionally biased toward polar residues. The segment covering 1188–1198 (NNNNNNSNNSN) has biased composition (low complexity). Residues 1199-1209 (TQYPIITSPPS) show a composition bias toward polar residues.

The protein belongs to the INCENP family. In terms of assembly, interacts with aurK.

It is found in the chromosome. The protein resides in the centromere. It localises to the cytoplasm. Its subcellular location is the cytoskeleton. The protein localises to the spindle. It is found in the nucleus. The protein resides in the cleavage furrow. Functionally, chromosomal passenger protein that seems to be required for chromosome segregation and the onset of cytokinesis during mitosis. Plays a key role in the abscission of daughter cells at the end of cytokinesis and in the establishment or maintenance of a bipolar spindle. The chain is Inner centromere protein A (icpA) from Dictyostelium discoideum (Social amoeba).